Consider the following 138-residue polypeptide: Small ribosomal subunit protein uS11c (138 aa).

A disordered region spans residues 1–23; that stretch reads MAKPILRIGSRKNTRSGSRKNVR. Over residues 9 to 23 the composition is skewed to basic residues; that stretch reads GSRKNTRSGSRKNVR.

The protein belongs to the universal ribosomal protein uS11 family. In terms of assembly, part of the 30S ribosomal subunit.

It localises to the plastid. It is found in the chloroplast. This Crucihimalaya wallichii (Rock-cress) protein is Small ribosomal subunit protein uS11c.